We begin with the raw amino-acid sequence, 293 residues long: Beta-porphyranase B (293 aa).

Residues 1-21 (MKLSNQFLITITLLITSITFA) form the signal peptide. Residues 38 to 291 (QEWKLIENMS…WVRSWQLVDS (254 aa)) form the GH16 domain. Residues tryptophan 67, arginine 70, glutamate 156, glutamate 161, and glutamate 256 each contribute to the substrate site. Glutamate 156 serves as the catalytic Nucleophile. Glutamate 161 (proton donor) is an active-site residue.

It belongs to the glycosyl hydrolase 16 family.

The protein localises to the periplasm. The enzyme catalyses Hydrolysis of beta-D-galactopyranose-(1-&gt;4)-alpha-L-galactopyranose-6-sulfate linkages in porphyran.. Cleaves the sulfated polysaccharide porphyran at the (1-&gt;4) linkages between beta-D-galactopyranose and alpha-L-galactopyranose-6-sulfate, forming mostly the disaccharide alpha-L-galactopyranose-6-sulfate-(1-&gt;3)-beta-D-galactose. Some longer oligosaccharides of even number of residues are also observed. Inactive on the non-sulfated agarose portion of the porphyran backbone. In contrast to PorA, tolerates the presence of 3-6-anhydro-L-galactose in subsite -2. This is Beta-porphyranase B (porB) from Zobellia galactanivorans (strain DSM 12802 / CCUG 47099 / CIP 106680 / NCIMB 13871 / Dsij).